The primary structure comprises 264 residues: Thymidylate synthase (264 aa).

Residue Arg21 participates in dUMP binding. His51 provides a ligand contact to (6R)-5,10-methylene-5,6,7,8-tetrahydrofolate. Position 126 to 127 (126 to 127 (RR)) interacts with dUMP. The active-site Nucleophile is Cys146. DUMP contacts are provided by residues 166-169 (RSAD), Asn177, and 207-209 (HLY). (6R)-5,10-methylene-5,6,7,8-tetrahydrofolate is bound at residue Asp169. Ala263 lines the (6R)-5,10-methylene-5,6,7,8-tetrahydrofolate pocket.

It belongs to the thymidylate synthase family. Bacterial-type ThyA subfamily. As to quaternary structure, homodimer.

Its subcellular location is the cytoplasm. The catalysed reaction is dUMP + (6R)-5,10-methylene-5,6,7,8-tetrahydrofolate = 7,8-dihydrofolate + dTMP. The protein operates within pyrimidine metabolism; dTTP biosynthesis. In terms of biological role, catalyzes the reductive methylation of 2'-deoxyuridine-5'-monophosphate (dUMP) to 2'-deoxythymidine-5'-monophosphate (dTMP) while utilizing 5,10-methylenetetrahydrofolate (mTHF) as the methyl donor and reductant in the reaction, yielding dihydrofolate (DHF) as a by-product. This enzymatic reaction provides an intracellular de novo source of dTMP, an essential precursor for DNA biosynthesis. This chain is Thymidylate synthase, found in Bartonella tribocorum (strain CIP 105476 / IBS 506).